Consider the following 100-residue polypeptide: Elicitin Vex2 (100 aa).

3 disulfides stabilise this stretch: cysteine 3–cysteine 71, cysteine 27–cysteine 56, and cysteine 51–cysteine 95.

The protein belongs to the elicitin family.

It is found in the secreted. Functionally, induces local and distal defense responses (incompatible hypersensitive reaction) in plants from the solanaceae and cruciferae families. Elicits leaf necrosis and causes the accumulation of pathogenesis-related proteins. Might interact with the lipidic molecules of the plasma membrane. The chain is Elicitin Vex2 from Phytopythium vexans (Damping-off fungus).